We begin with the raw amino-acid sequence, 230 residues long: CRP-like protein Clp (230 aa).

Pro18 to Val139 lines the a nucleoside 3',5'-cyclic phosphate pocket. The HTH crp-type domain occupies Leu158–Arg230. Residues Arg190 to Lys209 constitute a DNA-binding region (H-T-H motif).

In terms of assembly, homodimer.

It is found in the cytoplasm. Its activity is regulated as follows. Allosterically inhibited by cyclic di-GMP (c-di-GMP), which binds to Clp and abolishes its ability to bind its target gene promoter. Functionally, global transcriptional regulator that regulates virulence factors production by activating or repressing the expression of a large set of genes in diffusible signal factor (DSF) pathway. The polypeptide is CRP-like protein Clp (clp) (Xanthomonas oryzae pv. oryzae (strain MAFF 311018)).